Here is a 233-residue protein sequence, read N- to C-terminus: Large ribosomal subunit protein uL1 (233 aa).

It belongs to the universal ribosomal protein uL1 family. Part of the 50S ribosomal subunit.

Binds directly to 23S rRNA. The L1 stalk is quite mobile in the ribosome, and is involved in E site tRNA release. Its function is as follows. Protein L1 is also a translational repressor protein, it controls the translation of the L11 operon by binding to its mRNA. In Vibrio parahaemolyticus serotype O3:K6 (strain RIMD 2210633), this protein is Large ribosomal subunit protein uL1.